Reading from the N-terminus, the 136-residue chain is Probable endoribonuclease MazF7 (136 aa).

Residues 115 to 136 form a disordered region; the sequence is TGPERGEAATHSPVRWTGGRDP.

The protein belongs to the PemK/MazF family. Forms a complex with cognate antitoxin MazE7.

Functionally, toxic component of a type II toxin-antitoxin (TA) system. Upon expression in E.coli and M.smegmatis inhibits cell growth and colony formation. Its toxic effect is neutralized by coexpression with cognate antitoxin MazE7. Probably an endoribonuclease. The chain is Probable endoribonuclease MazF7 (mazF7) from Mycobacterium tuberculosis (strain ATCC 25618 / H37Rv).